The following is a 468-amino-acid chain: Trehalose-binding lipoprotein LpqY (468 aa).

The signal sequence occupies residues 1–25 (MVMSRGRIPRLGAAVLVALTTAAAA). Cysteine 26 is lipidated: N-palmitoyl cysteine. Cysteine 26 carries the S-diacylglycerol cysteine lipid modification. Cysteines 54 and 372 form a disulfide. 6 residues coordinate alpha,alpha-trehalose: aspartate 97, asparagine 151, tryptophan 276, phenylalanine 278, glycine 351, and arginine 421.

This sequence belongs to the bacterial solute-binding protein 1 family. As to quaternary structure, monomer. The complex is composed of two ATP-binding proteins (SugC), two transmembrane proteins (SugA and SugB) and a solute-binding protein (LpqY).

It is found in the cell inner membrane. Its function is as follows. Part of the ABC transporter complex LpqY-SugA-SugB-SugC, which is highly specific for uptake of trehalose. Involved in the recycling of extracellular trehalose released from trehalose-containing molecules synthesized by M.tuberculosis. Trehalose uptake is essential for virulence. The protein is Trehalose-binding lipoprotein LpqY (lpqY) of Mycobacterium tuberculosis (strain CDC 1551 / Oshkosh).